Reading from the N-terminus, the 442-residue chain is tRNA modification GTPase MnmE (442 aa).

Arg-24, Glu-84, and Arg-124 together coordinate (6S)-5-formyl-5,6,7,8-tetrahydrofolate. Positions 218–366 constitute a TrmE-type G domain; that stretch reads GARVALFGPV…LRDDMLGRLW (149 aa). GTP contacts are provided by residues 228 to 233, 247 to 253, and 272 to 275; these read NAGKST, DDEPGTT, and DTAG. Positions 232 and 253 each coordinate Mg(2+). Residue Lys-442 participates in (6S)-5-formyl-5,6,7,8-tetrahydrofolate binding.

The protein belongs to the TRAFAC class TrmE-Era-EngA-EngB-Septin-like GTPase superfamily. TrmE GTPase family. Homodimer. Heterotetramer of two MnmE and two MnmG subunits. Requires K(+) as cofactor.

The protein localises to the cytoplasm. Exhibits a very high intrinsic GTPase hydrolysis rate. Involved in the addition of a carboxymethylaminomethyl (cmnm) group at the wobble position (U34) of certain tRNAs, forming tRNA-cmnm(5)s(2)U34. In Myxococcus xanthus (strain DK1622), this protein is tRNA modification GTPase MnmE.